Consider the following 149-residue polypeptide: MADKLTEEQISEFKEAFSLFDKDGDGTITTKELGTVMRSLGQNPTEAELQDMINEIDTDGNGTIDFPEFLTLMARKLKDTDTEEELIEAFRVFDRDGDGYISADELRHVMTNLGEKLTNEEVDEMIREADIDGDGQINYEEFVKMMIAK.

Ala2 is subject to N-acetylalanine. EF-hand domains are found at residues 8–43, 44–79, 81–116, and 117–149; these read EQIS…LGQN, PTEA…KLKD, DTEE…LGEK, and LTNE…MIAK. Ca(2+) contacts are provided by Asp21, Asp23, Asp25, Thr27, Glu32, Asp57, Asp59, Asn61, Thr63, Glu68, Asp94, Asp96, Asp98, Tyr100, Glu105, Asp130, Asp132, Asp134, Gln136, and Glu141.

Belongs to the calmodulin family.

The protein resides in the cytoplasm. Calmodulin mediates the control of a large number of enzymes, ion channels and other proteins by Ca(2+). Among the enzymes to be stimulated by the calmodulin-Ca(2+) complex are a number of protein kinases and phosphatases. This Plasmodium falciparum (isolate 3D7) protein is Calmodulin.